The sequence spans 202 residues: MKSFKETIINACLMGFFSFFSLSSVIFVKNITNNQIKNIKEKQKNTLIQQVIPRVMYHSFEKKYFLIKDKLLGDQKKHNLWLLFKNKQAKVAVVESIAPDGYSGSISILVAAYLNGKIIGVRVLSHKETPGIGDKIEISISNWITKFQDMNVIDLKDKKFLLKKYGGKIEQFTGATITPQSVSNAVKRTVVFIKKIPLIFSL.

A helical transmembrane segment spans residues 11–31 (ACLMGFFSFFSLSSVIFVKNI). An FMN phosphoryl threonine modification is found at Thr-176.

This sequence belongs to the RnfG family. As to quaternary structure, the complex is composed of six subunits: RnfA, RnfB, RnfC, RnfD, RnfE and RnfG. It depends on FMN as a cofactor.

It is found in the cell inner membrane. Part of a membrane-bound complex that couples electron transfer with translocation of ions across the membrane. The polypeptide is Ion-translocating oxidoreductase complex subunit G (Buchnera aphidicola subsp. Schizaphis graminum (strain Sg)).